Reading from the N-terminus, the 602-residue chain is Carbon catabolite repressor protein 4 homolog 1 (602 aa).

Residues 113-136 (ASAATEGNDEEELPRLNSSGSGSG) form a disordered region. Position 299 (E299) interacts with Mg(2+).

Belongs to the CCR4/nocturin family. Component of the CCR4-NOT complex, at least composed of CRR4 and CAF1 proteins. Requires Mg(2+) as cofactor.

It localises to the nucleus. Its subcellular location is the cytoplasm. It carries out the reaction Exonucleolytic cleavage of poly(A) to 5'-AMP.. Acts as a catalytic component of the CCR4-NOT core complex, which in the nucleus seems to be a general transcription factor, and in the cytoplasm the major mRNA deadenylase involved in mRNA turnover. The protein is Carbon catabolite repressor protein 4 homolog 1 (CCR4-1) of Arabidopsis thaliana (Mouse-ear cress).